Reading from the N-terminus, the 201-residue chain is ADP-ribosylation factor-related protein 1 (201 aa).

An N-acetylmethionine modification is found at M1. Residues 24–31 (GLDNAGKT), 75–79 (DLGGQ), and 134–137 (NKQD) each bind GTP.

Belongs to the small GTPase superfamily. Arf family. Interacts with SYS1.

Its subcellular location is the golgi apparatus. The protein resides in the trans-Golgi network. In terms of biological role, trans-Golgi-associated GTPase that regulates protein sorting. Controls the targeting of ARL1 and its effector to the trans-Golgi. Required for the lipidation of chylomicrons in the intestine and required for VLDL lipidation in the liver. The polypeptide is ADP-ribosylation factor-related protein 1 (Arfrp1) (Mus musculus (Mouse)).